We begin with the raw amino-acid sequence, 1724 residues long: Protein CHROMATIN REMODELING 5 (1724 aa).

2 disordered regions span residues 24-88 (QNAA…QSST) and 104-415 (DCQP…DDIE). Over residues 25–34 (NAATFQSSPL) the composition is skewed to polar residues. The span at 126–144 (EAYHSEDNHSNDRSEKLDS) shows a compositional bias: basic and acidic residues. A coiled-coil region spans residues 138–164 (RSEKLDSENENDNENEEEDNEMNKHQS). Acidic residues-rich tracts occupy residues 145-157 (ENEN…EEDN), 170-186 (PADE…DEDN), 239-264 (ADMD…DAAD), and 278-297 (VSDE…YEDD). A compositionally biased stretch (basic residues) spans 301–313 (KKPKVRQQSKGFR). The short motif at 320-327 (ERKSFHVS) is the Nuclear localization signal 1 element. Positions 337–350 (QDDDSEEDSENDND) are enriched in acidic residues. Polar residues predominate over residues 362 to 376 (TLRQNNGRSTNTIGQ). Basic and acidic residues predominate over residues 403 to 412 (DGKNRKNQKD). Positions 420–499 (DVIEKVLWHQ…FKKVLNYTKK (80 aa)) constitute a Chromo 1 domain. Residues 505–525 (RYRTALSREEIEVNDVSKEMD) adopt a coiled-coil conformation. The 65-residue stretch at 533–597 (SQVERIIADR…REVSIAVQGK (65 aa)) folds into the Chromo 2 domain. One can recognise a Helicase ATP-binding domain in the interval 637 to 809 (VNSWLNDTNV…WALLHFLDPG (173 aa)). 650–657 (DEMGLGKT) is an ATP binding site. The DEAH box signature appears at 760-763 (DEAH). Positions 943-1094 (ILDKLLVRLR…HLVIQKLNAE (152 aa)) constitute a Helicase C-terminal domain. Residues 1126–1163 (KEDKNDEESKKRLLSMDIDEILERAEQVEEKHTDETEH) are a coiled coil. A disordered region spans residues 1199 to 1245 (ALAPRAARNTKSYVDPSHPDRTSKRKKKGSEPPEHTERSQKRRKTEY). 2 short sequence motifs (nuclear localization signal) span residues 1224–1231 (KKKGSEPP) and 1348–1355 (LKRVQGLQ). Residues 1227–1237 (GSEPPEHTERS) show a composition bias toward basic and acidic residues. 2 disordered regions span residues 1480-1524 (QFKA…EMSD) and 1654-1724 (KFKT…FPPR). The span at 1504 to 1520 (DGPRKTQKAEPLVKEEG) shows a compositional bias: basic and acidic residues. Over residues 1658-1667 (AGNSQGSQQV) the composition is skewed to polar residues. Positions 1669–1691 (KGIDTAKFEAWKRRRRTENDVQT) are enriched in basic and acidic residues. Over residues 1692–1702 (ERPTITNSNSL) the composition is skewed to polar residues.

This sequence belongs to the SNF2/RAD54 helicase family.

It is found in the nucleus. Its function is as follows. DNA-binding helicase that specifically binds to the promoter of target genes, leading to chromatin remodeling, possibly by promoting deposition of histone H3.3. Probable chromatin remodeling factor. The polypeptide is Protein CHROMATIN REMODELING 5 (Arabidopsis thaliana (Mouse-ear cress)).